A 123-amino-acid polypeptide reads, in one-letter code: Large ribosomal subunit protein uL14 (123 aa).

It belongs to the universal ribosomal protein uL14 family. In terms of assembly, part of the 50S ribosomal subunit. Forms a cluster with proteins L3 and L19. In the 70S ribosome, L14 and L19 interact and together make contacts with the 16S rRNA in bridges B5 and B8.

Its function is as follows. Binds to 23S rRNA. Forms part of two intersubunit bridges in the 70S ribosome. This Vibrio vulnificus (strain CMCP6) protein is Large ribosomal subunit protein uL14.